Reading from the N-terminus, the 700-residue chain is Elongation factor G (700 aa).

Residues 8 to 290 (ERYRNIGISA…AVVEYLPAPT (283 aa)) enclose the tr-type G domain. GTP is bound by residues 17–24 (AHIDAGKT), 88–92 (DTPGH), and 142–145 (NKMD).

This sequence belongs to the TRAFAC class translation factor GTPase superfamily. Classic translation factor GTPase family. EF-G/EF-2 subfamily.

The protein resides in the cytoplasm. In terms of biological role, catalyzes the GTP-dependent ribosomal translocation step during translation elongation. During this step, the ribosome changes from the pre-translocational (PRE) to the post-translocational (POST) state as the newly formed A-site-bound peptidyl-tRNA and P-site-bound deacylated tRNA move to the P and E sites, respectively. Catalyzes the coordinated movement of the two tRNA molecules, the mRNA and conformational changes in the ribosome. The sequence is that of Elongation factor G from Haemophilus influenzae (strain PittEE).